Reading from the N-terminus, the 267-residue chain is DNA repair protein RecO (267 aa).

The protein belongs to the RecO family.

Functionally, involved in DNA repair and RecF pathway recombination. This chain is DNA repair protein RecO, found in Moorella thermoacetica (strain ATCC 39073 / JCM 9320).